The sequence spans 98 residues: Protein FAM24A (98 aa).

The first 29 residues, 1-29 (MFDLRTKVMIGIASTLLIAAIMLITLVFC), serve as a signal peptide directing secretion.

The protein belongs to the FAM24 family.

Its subcellular location is the secreted. The sequence is that of Protein FAM24A (Fam24a) from Mus musculus (Mouse).